A 113-amino-acid polypeptide reads, in one-letter code: Large ribosomal subunit protein uL24 (113 aa).

The protein belongs to the universal ribosomal protein uL24 family. In terms of assembly, part of the 50S ribosomal subunit.

In terms of biological role, one of two assembly initiator proteins, it binds directly to the 5'-end of the 23S rRNA, where it nucleates assembly of the 50S subunit. Its function is as follows. One of the proteins that surrounds the polypeptide exit tunnel on the outside of the subunit. The polypeptide is Large ribosomal subunit protein uL24 (Micrococcus luteus (strain ATCC 4698 / DSM 20030 / JCM 1464 / CCM 169 / CCUG 5858 / IAM 1056 / NBRC 3333 / NCIMB 9278 / NCTC 2665 / VKM Ac-2230) (Micrococcus lysodeikticus)).